Reading from the N-terminus, the 474-residue chain is Vasculin-like protein 1 (474 aa).

Positions 17-42 are disordered; that stretch reads QSAKSPTATFEKHGEHLPRGEGRFGV. Basic and acidic residues predominate over residues 26 to 38; that stretch reads FEKHGEHLPRGEG. Phosphoserine occurs at positions 49 and 76. The interval 91 to 191 is disordered; sequence GNPSGWHSSS…VWENPPSAKQ (101 aa). Over residues 116 to 128 the composition is skewed to basic residues; sequence NHRHWNGSFHSRK. Residues 136–154 show a composition bias toward basic and acidic residues; it reads PPMEIREEKKEDKVEKLQF. Ser202 carries the post-translational modification Phosphoserine. Residues 238-371 are disordered; the sequence is LVPKPVPPPS…EEGCHQNGLA (134 aa). Residues 262–277 show a composition bias toward polar residues; sequence GSLSSSRESAFTSPIS. Low complexity predominate over residues 291 to 312; that stretch reads SSPKESPSSTTPPIEISSSRLT. Ser292 carries the phosphoserine modification. Thr301 carries the phosphothreonine modification. Basic and acidic residues-rich tracts occupy residues 317-346 and 356-365; these read RTTD…CDKL and EPKENGEEGC. Ser382 carries the phosphoserine modification. The tract at residues 453–474 is disordered; it reads AEFEDSDTETSSSETSDDDAWK.

It belongs to the vasculin family.

It localises to the nucleus. In terms of biological role, possible transcription factor. The polypeptide is Vasculin-like protein 1 (GPBP1L1) (Homo sapiens (Human)).